We begin with the raw amino-acid sequence, 698 residues long: Endogenous retrovirus group K member 9 Env polyprotein (698 aa).

The interval 1–47 (MNPSEMQRKAPPRRRRHRNRAPLTHKMNKMVTSEEQMKLPSTKKAEP) is disordered. A signal peptide spans 1–89 (MNPSEMQRKA…ALMIVSMVVS (89 aa)). Positions 10–20 (APPRRRRHRNR) are enriched in basic residues. The Extracellular portion of the chain corresponds to 90 to 631 (LPMPAGAAAA…NLNPVTWVKT (542 aa)). Residues N100, N128, N153, N273, N354, N371, and N460 are each glycosylated (N-linked (GlcNAc...) asparagine). A fusion peptide region spans residues 465-485 (FIFTLIAVIMGLIAVTATAAV). 4 N-linked (GlcNAc...) asparagine glycosylation sites follow: N506, N553, N565, and N584. The chain crosses the membrane as a helical span at residues 632-652 (IGSTTIINLILILVCLFCLLL). Residues 653 to 698 (VCRCTQQLRRDSDHRERAMMTMAVLSKRKGGNVGKSKRDQIVTVSV) lie on the Cytoplasmic side of the membrane.

The protein belongs to the beta type-B retroviral envelope protein family. HERV class-II K(HML-2) env subfamily. The surface (SU) and transmembrane (TM) proteins form a heterodimer. SU and TM are attached by noncovalent interactions or by a labile interchain disulfide bond. In terms of processing, specific enzymatic cleavages in vivo yield the mature SU and TM proteins.

It is found in the cell membrane. It localises to the virion. Functionally, retroviral envelope proteins mediate receptor recognition and membrane fusion during early infection. Endogenous envelope proteins may have kept, lost or modified their original function during evolution. This endogenous envelope protein has lost its original fusogenic properties. SU mediates receptor recognition. In terms of biological role, TM anchors the envelope heterodimer to the viral membrane through one transmembrane domain. The other hydrophobic domain, called fusion peptide, mediates fusion of the viral membrane with the target cell membrane. The protein is Endogenous retrovirus group K member 9 Env polyprotein (ERVK-9) of Homo sapiens (Human).